Consider the following 185-residue polypeptide: Ribosome-recycling factor (185 aa).

This sequence belongs to the RRF family.

The protein localises to the cytoplasm. Functionally, responsible for the release of ribosomes from messenger RNA at the termination of protein biosynthesis. May increase the efficiency of translation by recycling ribosomes from one round of translation to another. This Shewanella pealeana (strain ATCC 700345 / ANG-SQ1) protein is Ribosome-recycling factor.